The following is a 54-amino-acid chain: Preprotein translocase subunit SecG (54 aa).

Residues 1-31 (MSSGQNSGGLMSSAGLVRYFDAEDRNSIRID) lie on the Cytoplasmic side of the membrane. A helical transmembrane segment spans residues 32 to 53 (PKTIVAFGVLFGVGVLVLNALA). Position 54 (Ile-54) is a topological domain, extracellular.

This sequence belongs to the SEC61-beta family. Component of the protein translocase complex. Heterotrimer consisting of alpha (SecY), beta (SecG) and gamma (SecE) subunits. Can form oligomers of the heterotrimer.

Its subcellular location is the cell membrane. Involved in protein export. The function of the beta subunit is unknown, but it may be involved in stabilization of the trimeric complex. The polypeptide is Preprotein translocase subunit SecG (Haloquadratum walsbyi (strain DSM 16790 / HBSQ001)).